The following is a 359-amino-acid chain: Tricarboxylate transport protein A, mitochondrial (359 aa).

Solcar repeat units lie at residues 71 to 159 (THPW…LSNP), 170 to 256 (KASL…LRNW), and 266 to 351 (MHPL…VVKL). The next 4 helical transmembrane spans lie at 77–97 (IFAGGIAGGIEICITFPTEYV), 171–191 (ASLLCGLGAGIAEAVLVVCPM), 269–289 (LVTAMFGATAGAASVFGNTPL), and 336–356 (LDVAIVFVLYEEVVKLLNNVW).

Belongs to the mitochondrial carrier (TC 2.A.29) family. Post-translationally, possesses a short cleavable presequence, which, however, is found to be dispensable both for targeting to mitochondria and insertion into the inner membrane. However, the presequence is required to keep SLC25A1 in a soluble state and thus in an import-competent state. Mature SLC25A1 lacking the presequence is prone to aggregation.

The protein localises to the mitochondrion inner membrane. The catalysed reaction is (S)-malate(in) + citrate(out) = (S)-malate(out) + citrate(in). It carries out the reaction D-threo-isocitrate(in) + citrate(out) = D-threo-isocitrate(out) + citrate(in). The enzyme catalyses citrate(out) + succinate(in) = citrate(in) + succinate(out). It catalyses the reaction cis-aconitate(in) + citrate(out) = cis-aconitate(out) + citrate(in). The catalysed reaction is trans-aconitate(in) + citrate(out) = trans-aconitate(out) + citrate(in). It carries out the reaction phosphoenolpyruvate(in) + citrate(out) = phosphoenolpyruvate(out) + citrate(in). The enzyme catalyses maleate(in) + citrate(out) = maleate(out) + citrate(in). In terms of biological role, mitochondrial electroneutral antiporter that exports citrate from the mitochondria into the cytosol in exchange for malate. Also able to mediate the exchange of citrate for isocitrate, phosphoenolpyruvate, cis-aconitate and to a lesser extent trans-aconitate, maleate and succinate. In the cytoplasm, citrate plays important roles in fatty acid and sterol synthesis, regulation of glycolysis, protein acetylation, and other physiopathological processes. The polypeptide is Tricarboxylate transport protein A, mitochondrial (Danio rerio (Zebrafish)).